The sequence spans 492 residues: Phosphatidylinositol-glycan biosynthesis class W protein (492 aa).

The next 5 membrane-spanning stretches (helical) occupy residues 26 to 46 (FILT…ATFF), 59 to 79 (FILE…FTEL), 82 to 102 (FLIV…QKNV), 127 to 147 (YRAF…FQVF), and 156 to 176 (TYGI…GALV). The tract at residues 185–216 (IEKQQKKKREEEEDDNDKINKTSSSSSSSSSA) is disordered. N-linked (GlcNAc...) asparagine glycosylation is present at Asn204. Positions 205–216 (KTSSSSSSSSSA) are enriched in low complexity. The chain crosses the membrane as a helical span at residues 264 to 284 (YGLHWNFFFTLGFVSISLAFL). Asn289 carries N-linked (GlcNAc...) asparagine glycosylation. A run of 4 helical transmembrane segments spans residues 290–310 (ISAI…NSFG), 331–351 (ICSF…GTEL), 364–384 (FATK…LCEI), and 399–419 (VLAI…ITLI). Asn424 carries an N-linked (GlcNAc...) asparagine glycan. Helical transmembrane passes span 437–457 (LFIF…MKTI) and 464–484 (SMII…ILDY).

Belongs to the PIGW family.

The protein localises to the endoplasmic reticulum membrane. It participates in glycolipid biosynthesis; glycosylphosphatidylinositol-anchor biosynthesis. Functionally, probable acetyltransferase, which acetylates the inositol ring of phosphatidylinositol during biosynthesis of GPI-anchor. This chain is Phosphatidylinositol-glycan biosynthesis class W protein, found in Dictyostelium discoideum (Social amoeba).